An 83-amino-acid chain; its full sequence is Small ribosomal subunit protein bS16 (83 aa).

The protein belongs to the bacterial ribosomal protein bS16 family.

The chain is Small ribosomal subunit protein bS16 from Pseudomonas entomophila (strain L48).